Consider the following 479-residue polypeptide: tRNA-dihydrouridine(20) synthase [NAD(P)+] (479 aa).

FMN contacts are provided by residues 14–16 and Gln87; that span reads PMV. Cys116 functions as the Proton donor in the catalytic mechanism. FMN contacts are provided by residues Lys159, His187, 221–223, and 245–246; these read NGD and AR.

Belongs to the Dus family. Dus2 subfamily. The cofactor is FMN.

It localises to the cytoplasm. Its subcellular location is the nucleus. The enzyme catalyses 5,6-dihydrouridine(20) in tRNA + NADP(+) = uridine(20) in tRNA + NADPH + H(+). It carries out the reaction 5,6-dihydrouridine(20) in tRNA + NAD(+) = uridine(20) in tRNA + NADH + H(+). It catalyses the reaction a 5,6-dihydrouridine in mRNA + NAD(+) = a uridine in mRNA + NADH + H(+). The catalysed reaction is a 5,6-dihydrouridine in mRNA + NADP(+) = a uridine in mRNA + NADPH + H(+). Functionally, catalyzes the NADPH-dependent synthesis of dihydrouridine, a modified base found in the D-loop of most tRNAs. Specifically modifies U20 in cytoplasmic tRNAs. Also able to mediate dihydrouridylation of some mRNAs, thereby affecting their translation. This Schizosaccharomyces pombe (strain 972 / ATCC 24843) (Fission yeast) protein is tRNA-dihydrouridine(20) synthase [NAD(P)+].